We begin with the raw amino-acid sequence, 65 residues long: Protein translocase subunit SecE (65 aa).

Residues 38 to 58 form a helical membrane-spanning segment; that stretch reads IVIVTVVFFLIFFYALDLGIG.

Belongs to the SecE/SEC61-gamma family. As to quaternary structure, component of the Sec protein translocase complex. Heterotrimer consisting of SecY, SecE and SecG subunits. The heterotrimers can form oligomers, although 1 heterotrimer is thought to be able to translocate proteins. Interacts with the ribosome. Interacts with SecDF, and other proteins may be involved. Interacts with SecA.

It is found in the cell membrane. Essential subunit of the Sec protein translocation channel SecYEG. Clamps together the 2 halves of SecY. May contact the channel plug during translocation. The sequence is that of Protein translocase subunit SecE from Staphylococcus carnosus (strain TM300).